Consider the following 194-residue polypeptide: Dephospho-CoA kinase (194 aa).

Residues 4–194 (VIGLTGSIGM…VKEILQKLGA (191 aa)) enclose the DPCK domain. 12-17 (GMGKTT) is an ATP binding site.

The protein belongs to the CoaE family.

Its subcellular location is the cytoplasm. It carries out the reaction 3'-dephospho-CoA + ATP = ADP + CoA + H(+). Its pathway is cofactor biosynthesis; coenzyme A biosynthesis; CoA from (R)-pantothenate: step 5/5. Catalyzes the phosphorylation of the 3'-hydroxyl group of dephosphocoenzyme A to form coenzyme A. The chain is Dephospho-CoA kinase from Agrobacterium fabrum (strain C58 / ATCC 33970) (Agrobacterium tumefaciens (strain C58)).